A 194-amino-acid polypeptide reads, in one-letter code: Insertion element IS136 uncharacterized 21.2 kDa protein (194 aa).

The segment at 73–103 is disordered; the sequence is SCDRACAPTPGRDPPVSSLPNSRQPARQNPR. The span at 90-103 shows a compositional bias: polar residues; it reads SLPNSRQPARQNPR.

This Agrobacterium tumefaciens (strain T37) protein is Insertion element IS136 uncharacterized 21.2 kDa protein.